Reading from the N-terminus, the 310-residue chain is Ribose-phosphate pyrophosphokinase (310 aa).

ATP contacts are provided by residues 34–36 (DQE) and 93–94 (RQ). His127 and Asp167 together coordinate Mg(2+). Lys190 is a catalytic residue. D-ribose 5-phosphate contacts are provided by residues Arg192, Asp216, and 220–224 (DSGGT).

It belongs to the ribose-phosphate pyrophosphokinase family. Class I subfamily. Homohexamer. Mg(2+) serves as cofactor.

The protein localises to the cytoplasm. The enzyme catalyses D-ribose 5-phosphate + ATP = 5-phospho-alpha-D-ribose 1-diphosphate + AMP + H(+). It participates in metabolic intermediate biosynthesis; 5-phospho-alpha-D-ribose 1-diphosphate biosynthesis; 5-phospho-alpha-D-ribose 1-diphosphate from D-ribose 5-phosphate (route I): step 1/1. Functionally, involved in the biosynthesis of the central metabolite phospho-alpha-D-ribosyl-1-pyrophosphate (PRPP) via the transfer of pyrophosphoryl group from ATP to 1-hydroxyl of ribose-5-phosphate (Rib-5-P). The sequence is that of Ribose-phosphate pyrophosphokinase from Brucella melitensis biotype 1 (strain ATCC 23456 / CCUG 17765 / NCTC 10094 / 16M).